A 167-amino-acid chain; its full sequence is 3-isopropylmalate dehydratase small subunit (167 aa).

It belongs to the LeuD family. LeuD type 2 subfamily. In terms of assembly, heterodimer of LeuC and LeuD.

It catalyses the reaction (2R,3S)-3-isopropylmalate = (2S)-2-isopropylmalate. It functions in the pathway amino-acid biosynthesis; L-leucine biosynthesis; L-leucine from 3-methyl-2-oxobutanoate: step 2/4. Its function is as follows. Catalyzes the isomerization between 2-isopropylmalate and 3-isopropylmalate, via the formation of 2-isopropylmaleate. In Wolinella succinogenes (strain ATCC 29543 / DSM 1740 / CCUG 13145 / JCM 31913 / LMG 7466 / NCTC 11488 / FDC 602W) (Vibrio succinogenes), this protein is 3-isopropylmalate dehydratase small subunit.